The following is a 245-amino-acid chain: tRNA pseudouridine synthase A (245 aa).

Residue D52 is the Nucleophile of the active site. Y111 lines the substrate pocket.

It belongs to the tRNA pseudouridine synthase TruA family. As to quaternary structure, homodimer.

It carries out the reaction uridine(38/39/40) in tRNA = pseudouridine(38/39/40) in tRNA. In terms of biological role, formation of pseudouridine at positions 38, 39 and 40 in the anticodon stem and loop of transfer RNAs. The sequence is that of tRNA pseudouridine synthase A from Thermotoga petrophila (strain ATCC BAA-488 / DSM 13995 / JCM 10881 / RKU-1).